We begin with the raw amino-acid sequence, 335 residues long: UDP-3-O-acylglucosamine N-acyltransferase (335 aa).

H225 functions as the Proton acceptor in the catalytic mechanism.

This sequence belongs to the transferase hexapeptide repeat family. LpxD subfamily. Homotrimer.

It carries out the reaction a UDP-3-O-[(3R)-3-hydroxyacyl]-alpha-D-glucosamine + a (3R)-hydroxyacyl-[ACP] = a UDP-2-N,3-O-bis[(3R)-3-hydroxyacyl]-alpha-D-glucosamine + holo-[ACP] + H(+). It functions in the pathway bacterial outer membrane biogenesis; LPS lipid A biosynthesis. Functionally, catalyzes the N-acylation of UDP-3-O-acylglucosamine using 3-hydroxyacyl-ACP as the acyl donor. Is involved in the biosynthesis of lipid A, a phosphorylated glycolipid that anchors the lipopolysaccharide to the outer membrane of the cell. This is UDP-3-O-acylglucosamine N-acyltransferase from Delftia acidovorans (strain DSM 14801 / SPH-1).